Reading from the N-terminus, the 326-residue chain is UDP-N-acetylglucosamine transporter (326 aa).

The next 8 membrane-spanning stretches (helical) occupy residues 8–24, 42–58, 138–154, 174–190, 210–226, 247–263, 269–285, and 296–312; these read LSLGILVFQTTSLVLTM, AVVVAELLKIMACILLV, VYQWLSLVILMTGVAFV, FVGLMAVLTACFSSGFA, IQLGFFGSIFGLMGVYI, IVVILQALGGLVIAAVI, ILKGFATSLSIILSTLI, and TSVFFLGAILVITATFL.

The protein belongs to the nucleotide-sugar transporter family. SLC35A subfamily. Interacts with SLC35A2; the interaction is reduced in the presence of SLC35A4. Found in a complex with SLC35A2 and SLC35A4.

It localises to the golgi apparatus membrane. Uridine diphosphate-N-acetylglucosamine (UDP-GlcNAc) transporter in the Golgi apparatus. May supply UDP-GlcNAc as substrate for Golgi-resident glycosyltransferases that generate branching of diantennary oligosaccharides. This is UDP-N-acetylglucosamine transporter (SLC35A3) from Canis lupus familiaris (Dog).